The sequence spans 393 residues: S-adenosylmethionine synthase 1 (393 aa).

E9 lines the Mg(2+) pocket. H15 serves as a coordination point for ATP. Residue E43 participates in K(+) binding. The L-methionine site is built by E56 and Q99. Residues 167 to 169, 235 to 238, D246, 252 to 253, A269, K273, and K277 each bind ATP; these read DGK, SGRF, and RK. Position 246 (D246) interacts with L-methionine. Residue K277 participates in L-methionine binding.

This sequence belongs to the AdoMet synthase family. Homotetramer. Mn(2+) is required as a cofactor. The cofactor is Mg(2+). Requires Co(2+) as cofactor. It depends on K(+) as a cofactor.

It localises to the cytoplasm. It catalyses the reaction L-methionine + ATP + H2O = S-adenosyl-L-methionine + phosphate + diphosphate. It participates in amino-acid biosynthesis; S-adenosyl-L-methionine biosynthesis; S-adenosyl-L-methionine from L-methionine: step 1/1. Catalyzes the formation of S-adenosylmethionine from methionine and ATP. The reaction comprises two steps that are both catalyzed by the same enzyme: formation of S-adenosylmethionine (AdoMet) and triphosphate, and subsequent hydrolysis of the triphosphate. This Picea sitchensis (Sitka spruce) protein is S-adenosylmethionine synthase 1 (METK1).